The chain runs to 340 residues: Ribosomal RNA large subunit methyltransferase F (340 aa).

The protein belongs to the methyltransferase superfamily. METTL16/RlmF family.

It localises to the cytoplasm. The enzyme catalyses adenosine(1618) in 23S rRNA + S-adenosyl-L-methionine = N(6)-methyladenosine(1618) in 23S rRNA + S-adenosyl-L-homocysteine + H(+). Its function is as follows. Specifically methylates the adenine in position 1618 of 23S rRNA. The polypeptide is Ribosomal RNA large subunit methyltransferase F (Dechloromonas aromatica (strain RCB)).